Here is a 72-residue protein sequence, read N- to C-terminus: Large ribosomal subunit protein bL31c (72 aa).

Belongs to the bacterial ribosomal protein bL31 family. Type A subfamily. As to quaternary structure, part of the 50S ribosomal subunit.

The protein localises to the plastid. It localises to the chloroplast. In terms of biological role, binds the 23S rRNA. The polypeptide is Large ribosomal subunit protein bL31c (Guillardia theta (Cryptophyte)).